The chain runs to 148 residues: uncharacterized protein (148 aa).

The next 4 membrane-spanning stretches (helical) occupy residues 29-49 (FSLV…AAKE), 61-81 (PIIL…PLVM), 99-119 (FIVF…NGFL), and 121-141 (ILVS…TLCI).

The protein resides in the cell membrane. This is an uncharacterized protein from Bacillus subtilis (strain 168).